The chain runs to 221 residues: GTP cyclohydrolase 1 (221 aa).

Cysteine 109, histidine 112, and cysteine 180 together coordinate Zn(2+).

The protein belongs to the GTP cyclohydrolase I family. Toroid-shaped homodecamer, composed of two pentamers of five dimers.

It catalyses the reaction GTP + H2O = 7,8-dihydroneopterin 3'-triphosphate + formate + H(+). It functions in the pathway cofactor biosynthesis; 7,8-dihydroneopterin triphosphate biosynthesis; 7,8-dihydroneopterin triphosphate from GTP: step 1/1. This Serratia proteamaculans (strain 568) protein is GTP cyclohydrolase 1.